A 211-amino-acid chain; its full sequence is MKDCPDSLPVTSTGVPDGFWTRPVTEIARDLVGMTLLVDGCGGVIVETEAYDRDDPASHSFSGLTRRNASMFGLPGHAYVYRSYGIHWCFNIVCGPVPGGAVLIRALHPMFGLEAMQLRRGAIRLRDLCRGPGRLCQALGITDGMDGLSLCRPPFDLQPCHKTGEASDLIAAGPRIGITRAIETPWRFYQAESVFVSGSRSSRFLINKAGK.

Belongs to the DNA glycosylase MPG family.

In Granulibacter bethesdensis (strain ATCC BAA-1260 / CGDNIH1), this protein is Putative 3-methyladenine DNA glycosylase.